A 120-amino-acid chain; its full sequence is UPF0102 protein COXBURSA331_A1934 (120 aa).

The protein belongs to the UPF0102 family.

The sequence is that of UPF0102 protein COXBURSA331_A1934 from Coxiella burnetii (strain RSA 331 / Henzerling II).